The primary structure comprises 131 residues: Glycine cleavage system H protein (131 aa).

Positions 24-106 constitute a Lipoyl-binding domain; the sequence is RVTVGISDHA…YGEGWIFVVE (83 aa). N6-lipoyllysine is present on lysine 65.

This sequence belongs to the GcvH family. In terms of assembly, the glycine cleavage system is composed of four proteins: P, T, L and H. (R)-lipoate is required as a cofactor.

Functionally, the glycine cleavage system catalyzes the degradation of glycine. The H protein shuttles the methylamine group of glycine from the P protein to the T protein. The protein is Glycine cleavage system H protein of Xanthomonas campestris pv. campestris (strain 8004).